A 328-amino-acid polypeptide reads, in one-letter code: Interleukin-12 subunit beta (328 aa).

The first 22 residues, 1–22, serve as a signal peptide directing secretion; the sequence is MCHQQLVISWFSLVFLASPLVA. The 84-residue stretch at 23–106 folds into the Ig-like C2-type domain; that stretch reads IWELKKDVYV…LSHSLLLLHK (84 aa). 3 disulfide bridges follow: C50-C90, C131-C142, and C170-C193. A glycan (N-linked (GlcNAc...) asparagine) is linked at N135. N222 is a glycosylation site (N-linked (GlcNAc...) asparagine). A Fibronectin type-III domain is found at 237–328; it reads PPKNLQLKPL…WSEWASVPCS (92 aa). C300 and C327 are oxidised to a cystine. Residue W319 is glycosylated (C-linked (Man) tryptophan).

Belongs to the IL-12B family. As to quaternary structure, heterodimer with IL12A; disulfide-linked. The heterodimer is known as interleukin IL-12. Heterodimer with IL23A; disulfide-linked. The heterodimer is known as interleukin IL-23. Also secreted as a monomer. Interacts with NBR1; this interaction promotes IL-12 secretion. Known to be C-mannosylated in the recombinant protein; it is not yet known for sure if the wild-type protein is also modified.

Its subcellular location is the secreted. Functionally, cytokine that can act as a growth factor for activated T and NK cells, enhance the lytic activity of NK/lymphokine-activated killer cells, and stimulate the production of IFN-gamma by resting PBMC. Associates with IL23A to form the IL-23 interleukin, a heterodimeric cytokine which functions in innate and adaptive immunity. IL-23 may constitute with IL-17 an acute response to infection in peripheral tissues. IL-23 binds to a heterodimeric receptor complex composed of IL12RB1 and IL23R, activates the Jak-Stat signaling cascade, stimulates memory rather than naive T-cells and promotes production of pro-inflammatory cytokines. IL-23 induces autoimmune inflammation and thus may be responsible for autoimmune inflammatory diseases and may be important for tumorigenesis. This is Interleukin-12 subunit beta (IL12B) from Homo sapiens (Human).